We begin with the raw amino-acid sequence, 529 residues long: DNA-binding protein (529 aa).

The segment covering 1–17 has biased composition (basic and acidic residues); that stretch reads MASREEEQRETTPERGR. Disordered stretches follow at residues 1–108 and 125–168; these read MASR…VDSE and PVLI…SEST. Residues 129–139 are compositionally biased toward basic residues; it reads KHGKGGKRTVR. Residues 140–155 show a composition bias toward basic and acidic residues; it reads RLNEDDPVARGMRTQE. Over residues 156–165 the composition is skewed to acidic residues; sequence EKEESSEAES. Position 195 is a phosphotyrosine; by host (Y195). 2 residues coordinate Zn(2+): C284 and H286. Residues 297-331 form a flexible loop region; it reads IEMDVTSENGQRALKEQSSKAKIVKNRWGRNVVQI. Residues C339, C355, C396, C398, C450, and C467 each contribute to the Zn(2+) site. The tract at residues 513-529 is C-terminal arm, DBP binding; it reads VSLPVAHSDARQNPFDF.

It belongs to the adenoviridae E2A DNA-binding protein family. As to quaternary structure, homomultimerizes on viral ssDNA bound to pTP. Forms an initiation complex with viral polymerase, pTP and hosts NFIA and POU2F1/OCT1. Interacts with host SRCAP.

Its subcellular location is the host nucleus. Plays a role in the elongation phase of viral strand displacement replication by unwinding the template in an ATP-independent fashion, employing its capacity to form multimers. Also enhances the rate of initiation. Released from template upon second strand synthesis. Assembles in complex with viral pTP, viral pol, host NFIA and host POU2F1/OCT1 on viral origin of replication. Covers the whole ssDNA genome during synthesis. The complementary strand synthesis induces its release from DNA template. May inhibit cellular transcription mediated by the interaction between host SRCAP and CBP. The polypeptide is DNA-binding protein (Human adenovirus C serotype 2 (HAdV-2)).